A 363-amino-acid chain; its full sequence is NADH-quinone oxidoreductase subunit H (363 aa).

10 helical membrane-spanning segments follow: residues 29–49 (VLKI…YVVW), 62–82 (GPMY…KLLF), 96–116 (FIIA…VVPF), 127–147 (VGLL…ILAG), 163–183 (AAQV…VMIA), 202–222 (FFDW…VSGV), 238–257 (EIVA…LFFL), 264–286 (ILVS…QGWV), 299–319 (KGGW…YIWF), and 339–359 (FIPL…YGVI).

The protein belongs to the complex I subunit 1 family. NDH-1 is composed of 14 different subunits. Subunits NuoA, H, J, K, L, M, N constitute the membrane sector of the complex.

The protein localises to the cell inner membrane. It carries out the reaction a quinone + NADH + 5 H(+)(in) = a quinol + NAD(+) + 4 H(+)(out). Its function is as follows. NDH-1 shuttles electrons from NADH, via FMN and iron-sulfur (Fe-S) centers, to quinones in the respiratory chain. The immediate electron acceptor for the enzyme in this species is believed to be ubiquinone. Couples the redox reaction to proton translocation (for every two electrons transferred, four hydrogen ions are translocated across the cytoplasmic membrane), and thus conserves the redox energy in a proton gradient. This subunit may bind ubiquinone. This chain is NADH-quinone oxidoreductase subunit H, found in Xanthomonas oryzae pv. oryzae (strain PXO99A).